A 421-amino-acid polypeptide reads, in one-letter code: Histidine--tRNA ligase (421 aa).

This sequence belongs to the class-II aminoacyl-tRNA synthetase family. As to quaternary structure, homodimer.

It localises to the cytoplasm. The enzyme catalyses tRNA(His) + L-histidine + ATP = L-histidyl-tRNA(His) + AMP + diphosphate + H(+). This Ureaplasma urealyticum serovar 10 (strain ATCC 33699 / Western) protein is Histidine--tRNA ligase.